The following is a 194-amino-acid chain: Acid tolerance regulatory protein ActR (194 aa).

The Response regulatory domain maps to 24 to 138 (SLLIVDDDTA…DILAALIQRP (115 aa)). Residue Asp73 is modified to 4-aspartylphosphate.

Post-translationally, phosphorylated by ActS.

In terms of biological role, member of the two-component regulatory system ActS/ActR acting in acid tolerance. These data implicate that a two-component sensor may be involved in pH sensing and/or response. In Rhizobium meliloti (strain 1021) (Ensifer meliloti), this protein is Acid tolerance regulatory protein ActR (actR).